We begin with the raw amino-acid sequence, 73 residues long: Small hydrophobic protein (73 aa).

The Intravirion segment spans residues methionine 1–threonine 19. The helical; Signal-anchor for type II membrane protein transmembrane segment at leucine 20–isoleucine 40 threads the bilayer. Residues leucine 41–valine 73 lie on the Virion surface side of the membrane. A glycan (N-linked (GlcNAc...) asparagine; by host) is linked at asparagine 63.

This sequence belongs to the orthopneumovirus small hydrophobic protein family. As to quaternary structure, homopentamer forming a funnel-like pore. Interacts with glycoprotein G; this interaction occurs on the surface of virion particles and infected cells. Interacts with host BCAP31 (via C-terminus); this interaction is direct. In terms of processing, four species of SH have been detected in infected cell cytoplasm: a 7.5 kDa non-glycosylated form (SH0), a 13-15 kDa form that contains one or two N-linked carbohydrate side chains of the high-mannose type (SHg), a 21-30 kDa polylactosaminoglycan-modified form of the protein (SHp), and the isoform generated by alternative translational initiation. Of these different forms, SH0 is by far the most abundant protein detected during virus infection. Tyrosine phosphorylated.

Its subcellular location is the virion membrane. The protein localises to the host cell membrane. It is found in the host Golgi apparatus membrane. It localises to the host endoplasmic reticulum membrane. Its activity is regulated as follows. Channel activity is inhibited by copper. Also inhibited by small-molecule pyronin B. In terms of biological role, viroporin that forms a homopentameric ion channel displaying low ion selectivity. May play a role in virus morphogenesis and pathogenicity at various stages of the viral life cycle. Accumulates at the membrane of the Golgi apparatus in infected cells and may facilitate virus release by modifying the secretory pathway. May enhance host membrane permeability and disrupt cellular ion homeostasis, which can be sensed as damage-associated molecular patterns/danger signals, triggering NLRP3 inflammasome activation and inflammatory immune response. Also inhibits host TNFA-mediated signaling pathway and may delay apoptosis, allowing time for the virus to replicate. This chain is Small hydrophobic protein (SH), found in Bovine respiratory syncytial virus (strain A51908) (BRS).